The primary structure comprises 606 residues: NADH-ubiquinone oxidoreductase chain 5 (606 aa).

The next 16 helical transmembrane spans lie at 1-21 (MNLFTSFTLLTLLILTTPIMM), 35-55 (YVKNIVFCAFITSLVPAMVYL), 87-107 (LMFMPVALFITWSIMEFSMWY), 114-134 (INQFFKYLLLFLITMLILVTA), 140-160 (LFIGWEGVGIMSFLLIGWWFG), 171-191 (AILYNRIGDIGLLASMAWFLS), 211-233 (FPLMGLVLAAAGKSAQFGLHPWL), 241-261 (TPVSALLHSSTMVVAGIFLLV), 272-292 (LIQTVTLCLGAITTLFTAICA), 301-320 (IIAFSTSSQLGLMMVTIGLN), 325-347 (AFLHICTHAFFKAMLFLCSGSII), 366-386 (LPFTTTALIIGCLALTGMPFL), 413-433 (LIATSLTAVYSTRIIFFALLG), 457-477 (LLVGSIFAGFILSNSIPPMTT), 482-502 (MPLHLKLTALAMTTLGFIIAF), and 582-602 (GLIKLYFLSFLITITLSMILF).

Belongs to the complex I subunit 5 family. Core subunit of respiratory chain NADH dehydrogenase (Complex I) which is composed of 45 different subunits.

It localises to the mitochondrion inner membrane. It catalyses the reaction a ubiquinone + NADH + 5 H(+)(in) = a ubiquinol + NAD(+) + 4 H(+)(out). Functionally, core subunit of the mitochondrial membrane respiratory chain NADH dehydrogenase (Complex I) which catalyzes electron transfer from NADH through the respiratory chain, using ubiquinone as an electron acceptor. Essential for the catalytic activity and assembly of complex I. The protein is NADH-ubiquinone oxidoreductase chain 5 (MT-ND5) of Balaenoptera physalus (Fin whale).